The sequence spans 723 residues: Ribosome quality control complex subunit 1 (723 aa).

Residues 21–125 (SNSNANKMTS…DKGSDDDDDD (105 aa)) form a disordered region. Residues 27-37 (KMTSGKSTAGN) show a composition bias toward polar residues. Basic residues predominate over residues 93–108 (SSRRKKNKKAKRKQKN). Residues 109–118 (HTAEAAKDKG) are compositionally biased toward basic and acidic residues. A Phosphoserine modification is found at serine 119. Threonine 158 carries the phosphothreonine modification. Phosphoserine is present on serine 160.

It belongs to the TCF25 family. Component of the ribosome quality control complex (RQC), composed of the E3 ubiquitin ligase RKR1/LTN1, RQC1 and RQC2, as well as CDC48 and its ubiquitin-binding cofactors. RQC forms a stable complex with 60S ribosomal subunits.

It localises to the cytoplasm. Functionally, component of the ribosome quality control complex (RQC), a ribosome-associated complex that mediates ubiquitination and extraction of incompletely synthesized nascent chains for proteasomal degradation. Within the RQC complex, RQC1 is essential for the recruitment of CDC48 to incompletely synthesized nascent polypeptides that are ubiquitinated by RKR1/LTN1. The protein is Ribosome quality control complex subunit 1 of Saccharomyces cerevisiae (strain ATCC 204508 / S288c) (Baker's yeast).